The chain runs to 133 residues: Putative elongation factor 1-delta-like protein (133 aa).

A compositionally biased stretch (low complexity) spans 58-73 (SLAGSLGPGASSGPSG). Disordered regions lie at residues 58 to 77 (SLAG…DHSE) and 89 to 133 (NQRD…TSRG). Positions 89–102 (NQRDLAERAGEELA) are enriched in basic and acidic residues.

The protein belongs to the EF-1-beta/EF-1-delta family.

This Homo sapiens (Human) protein is Putative elongation factor 1-delta-like protein (EEF1DP3).